The following is a 307-amino-acid chain: MIEVIFLGTGGIKPTPERNVPSIAIKIGGEIILFDVGEGTLRQMEIARISPMKIKRVFITHFHGDHYLGLPALIQTMSLWKRKDPLHIYGPEGSSTFLQNLLNSGYFAPSFDILVHEISGKSRLKFKEYEVWAFEVSHGVPALGYVFKEKDKRGNFNLKKIKELGLEPGPWMKELERQKIIEINGKIVRLLEVTGPKKRGAKVVYSGDTEPCDEVIEFSRRGTLLIHEATYVNEEDRKDSYHTTIEEACEIWKKSKARKLVLFHRSPRYSFKEYKEKALSICPQAIIPRDFDRIAIEGAGDVLFKIR.

7 residues coordinate Zn(2+): His-61, His-63, Asp-65, His-66, His-138, Asp-208, and His-264. The Proton acceptor role is filled by Asp-65.

Belongs to the RNase Z family. In terms of assembly, homodimer. It depends on Zn(2+) as a cofactor.

The enzyme catalyses Endonucleolytic cleavage of RNA, removing extra 3' nucleotides from tRNA precursor, generating 3' termini of tRNAs. A 3'-hydroxy group is left at the tRNA terminus and a 5'-phosphoryl group is left at the trailer molecule.. In terms of biological role, zinc phosphodiesterase, which displays some tRNA 3'-processing endonuclease activity. Probably involved in tRNA maturation, by removing a 3'-trailer from precursor tRNA. The polypeptide is Ribonuclease Z (Pyrococcus horikoshii (strain ATCC 700860 / DSM 12428 / JCM 9974 / NBRC 100139 / OT-3)).